We begin with the raw amino-acid sequence, 750 residues long: Polyribonucleotide nucleotidyltransferase (750 aa).

Residues D519 and D525 each contribute to the Mg(2+) site. Positions 585-644 (PRVIAVKIPVDKIGEVIGPKGKMINQIQEDTGADISIEDDGTVYIGATNGPSADAARSAI) constitute a KH domain. Residues 656 to 728 (GERYLGTVVK…DRGKLSLSPV (73 aa)) enclose the S1 motif domain. A disordered region spans residues 725–750 (LSPVVAEEEGAASEDAPAEAAEESAE). Acidic residues predominate over residues 730–750 (AEEEGAASEDAPAEAAEESAE).

It belongs to the polyribonucleotide nucleotidyltransferase family. Mg(2+) is required as a cofactor.

Its subcellular location is the cytoplasm. It carries out the reaction RNA(n+1) + phosphate = RNA(n) + a ribonucleoside 5'-diphosphate. Functionally, involved in mRNA degradation. Catalyzes the phosphorolysis of single-stranded polyribonucleotides processively in the 3'- to 5'-direction. In Paenarthrobacter aurescens (strain TC1), this protein is Polyribonucleotide nucleotidyltransferase.